A 446-amino-acid chain; its full sequence is Exodeoxyribonuclease 7 large subunit (446 aa).

It belongs to the XseA family. Heterooligomer composed of large and small subunits.

The protein localises to the cytoplasm. It catalyses the reaction Exonucleolytic cleavage in either 5'- to 3'- or 3'- to 5'-direction to yield nucleoside 5'-phosphates.. In terms of biological role, bidirectionally degrades single-stranded DNA into large acid-insoluble oligonucleotides, which are then degraded further into small acid-soluble oligonucleotides. This Streptococcus pneumoniae serotype 4 (strain ATCC BAA-334 / TIGR4) protein is Exodeoxyribonuclease 7 large subunit.